The sequence spans 339 residues: Protein FAM50A (339 aa).

Positions 1 to 31 (MAQYKGAASEAGRAMHLMKKREKQREQMEQM) are disordered. The residue at position 2 (Ala-2) is an N-acetylalanine. A Glycyl lysine isopeptide (Lys-Gly) (interchain with G-Cter in SUMO2) cross-link involves residue Lys-100. The segment at 121-177 (SFTLEEEEEGGEEEEEAAMYEEEMEREEITTKKRKLGKNPDVDTSFLPDRDREEEEN) is disordered. Residues 124 to 146 (LEEEEEGGEEEEEAAMYEEEMER) show a composition bias toward acidic residues. The Nuclear localization signal motif lies at 152–155 (KKRK). Residues 168 to 177 (PDRDREEEEN) show a composition bias toward basic and acidic residues.

This sequence belongs to the FAM50 family. Interacts with EFTUD2, a component of the spliceosome U5 complex. Interacts with DDX41, a component of the spliceosome C complex. Widely expressed in fetal and adult tissues. Mostly abundant in fetal brain, liver and kidney; in the adult, high levels were also observed in heart, skeletal muscle, spleen, thymus, prostate and small intestine. Expressed in fetal cerebellum and hypothalamus. Low expression is observed in fetal temporal lobe.

The protein resides in the nucleus. Functionally, probably involved in the regulation of pre-mRNA splicing. In Homo sapiens (Human), this protein is Protein FAM50A (FAM50A).